An 870-amino-acid polypeptide reads, in one-letter code: Disks large homolog 2 (870 aa).

Residues Cys-5 and Cys-7 are each lipidated (S-palmitoyl cysteine). A Phosphoserine modification is found at Ser-28. Tyr-58 is modified (phosphotyrosine). Position 65 is a phosphoserine (Ser-65). 2 consecutive PDZ domains span residues Glu-98–Arg-184 and Glu-193–Pro-279. 6 positions are modified to phosphoserine: Ser-307, Ser-328, Ser-360, Ser-365, Ser-406, and Ser-414. The region spanning Lys-421 to Gln-501 is the PDZ 3 domain. Residue Tyr-505 is modified to Phosphotyrosine. Phosphoserine is present on residues Ser-528, Ser-530, Ser-553, Ser-627, and Ser-635. The region spanning Lys-536–Glu-606 is the SH3 domain. A Guanylate kinase-like domain is found at Thr-680–Glu-855. Phosphotyrosine occurs at positions 750 and 755.

Belongs to the MAGUK family. Interacts through its PDZ domains with NETO1. Interacts with NOS1/nNOS through second PDZ domain. Interacts with KCNJ2/Kir2.1 (via C-terminus) through one of its PDZ domains. Interacts with KCNJ4, Interacts with FRMPD4 (via C-terminus). Interacts with LRFN1, LRFN2 and LRFN4. Interacts with FASLG. Interacts with KCNJ4. Interacts with ADAM22. Interacts with DGKI (via PDZ-binding motif). Post-translationally, palmitoylation of isoform 1 is not required for targeting to postsynaptic density.

It localises to the cell membrane. The protein localises to the postsynaptic density. Its subcellular location is the synapse. It is found in the membrane. The protein resides in the cell projection. It localises to the axon. The protein localises to the perikaryon. In terms of biological role, required for perception of chronic pain through NMDA receptor signaling. Regulates surface expression of NMDA receptors in dorsal horn neurons of the spinal cord. Interacts with the cytoplasmic tail of NMDA receptor subunits as well as inward rectifying potassium channels. Involved in regulation of synaptic stability at cholinergic synapses. Part of the postsynaptic protein scaffold of excitatory synapses. This Homo sapiens (Human) protein is Disks large homolog 2 (DLG2).